Here is a 221-residue protein sequence, read N- to C-terminus: Esterase C25G4.2 (221 aa).

Catalysis depends on charge relay system residues S106, D166, and H194.

The protein belongs to the LovG family.

The polypeptide is Esterase C25G4.2 (Caenorhabditis elegans).